A 482-amino-acid polypeptide reads, in one-letter code: Coagulation factor X (482 aa).

An N-terminal signal peptide occupies residues Met-1–Pro-20. A propeptide spanning residues Gly-21–Arg-40 is cleaved from the precursor. The Gla domain occupies Ala-41–Glu-85. 4-carboxyglutamate occurs at positions 46, 47, 54, 56, 59, 60, 65, 66, 69, 72, 75, and 79. Cys-57 and Cys-62 are joined by a disulfide. Residues Asp-86–Glu-122 enclose the EGF-like 1; calcium-binding domain. 11 disulfide bridges follow: Cys-90/Cys-101, Cys-95/Cys-110, Cys-112/Cys-121, Cys-129/Cys-140, Cys-136/Cys-149, Cys-151/Cys-164, Cys-172/Cys-340, Cys-238/Cys-243, Cys-259/Cys-275, Cys-388/Cys-402, and Cys-413/Cys-441. Asp-103 carries the (3R)-3-hydroxyaspartate modification. The EGF-like 2 domain maps to Val-125–Leu-165. The propeptide at Val-184 to Arg-231 is activation peptide. N-linked (GlcNAc...) asparagine glycosylation is found at Asn-187 and Asn-218. The Peptidase S1 domain maps to Ile-232–Lys-465. Residues His-274 and Asp-320 each act as charge relay system in the active site. The active-site Charge relay system is Ser-417.

It belongs to the peptidase S1 family. The two chains are formed from a single-chain precursor by the excision of two Arg residues and are held together by 1 or more disulfide bonds. Forms a heterodimer with SERPINA5. Interacts with ixolaris, an anticoagulant protein from Ixodes scapularis saliva. Post-translationally, the vitamin K-dependent, enzymatic carboxylation of some glutamate residues allows the modified protein to bind calcium. N- and O-glycosylated. In terms of processing, proteolytically cleaved and activated by cathepsin CTSG. The activation peptide is cleaved by factor IXa (in the intrinsic pathway), or by factor VIIa (in the extrinsic pathway). Post-translationally, the iron and 2-oxoglutarate dependent 3-hydroxylation of aspartate and asparagine is (R) stereospecific within EGF domains. As to expression, plasma; synthesized in the liver.

It localises to the secreted. The enzyme catalyses Selective cleavage of Arg-|-Thr and then Arg-|-Ile bonds in prothrombin to form thrombin.. Its activity is regulated as follows. Inhibited by SERPINA5. Functionally, factor Xa is a vitamin K-dependent glycoprotein that converts prothrombin to thrombin in the presence of factor Va, calcium and phospholipid during blood clotting. Factor Xa activates pro-inflammatory signaling pathways in a protease-activated receptor (PAR)-dependent manner. The sequence is that of Coagulation factor X (F10) from Rattus norvegicus (Rat).